Consider the following 328-residue polypeptide: Peroxidase 63 (328 aa).

The N-terminal stretch at 1 to 27 (MAEQSQLKNLTIILLLLCLSFQSLSFA) is a signal peptide. Disulfide bonds link Cys-41–Cys-122, Cys-74–Cys-79, Cys-128–Cys-324, and Cys-207–Cys-234. His-72 (proton acceptor) is an active-site residue. Ca(2+)-binding residues include Asp-73, Gly-78, Asp-80, and Ser-82. Residue Pro-170 participates in substrate binding. His-200 serves as a coordination point for heme b. Residue Thr-201 participates in Ca(2+) binding. 2 N-linked (GlcNAc...) asparagine glycosylation sites follow: Asn-217 and Asn-218. Residues Asp-248, Thr-251, and Asp-256 each coordinate Ca(2+).

This sequence belongs to the peroxidase family. Classical plant (class III) peroxidase subfamily. The cofactor is heme b. Ca(2+) is required as a cofactor.

It is found in the secreted. It carries out the reaction 2 a phenolic donor + H2O2 = 2 a phenolic radical donor + 2 H2O. In terms of biological role, removal of H(2)O(2), oxidation of toxic reductants, biosynthesis and degradation of lignin, suberization, auxin catabolism, response to environmental stresses such as wounding, pathogen attack and oxidative stress. These functions might be dependent on each isozyme/isoform in each plant tissue. The sequence is that of Peroxidase 63 (PER63) from Arabidopsis thaliana (Mouse-ear cress).